The primary structure comprises 549 residues: uncharacterized protein (549 aa).

A run of 12 helical transmembrane segments spans residues 27 to 47 (ILRF…YVFV), 108 to 128 (PIVV…GVIF), 146 to 166 (TGLV…LAIA), 197 to 217 (AVAI…IPML), 233 to 253 (FIAI…FLLV), 265 to 285 (VAAI…LISL), 308 to 328 (FLVI…LSIL), 352 to 372 (LVLL…IFGV), 399 to 419 (TLLV…VGLG), 434 to 454 (LMLA…VAIG), 472 to 492 (IVSL…FQAI), and 501 to 521 (IFIW…VLIG).

It localises to the cell membrane. This is an uncharacterized protein from Mycoplasma pneumoniae (strain ATCC 29342 / M129 / Subtype 1) (Mycoplasmoides pneumoniae).